The chain runs to 1909 residues: Endoribonuclease Dicer homolog 1 (1909 aa).

The tract at residues 99-177 is disordered; it reads TVKENGLQKN…NNKKKRECNN (79 aa). The span at 110 to 124 shows a compositional bias: basic and acidic residues; it reads GKRDEFSKEEGDKDR. The span at 131 to 146 shows a compositional bias: polar residues; the sequence is SYQSERSNLSGRGHVN. The segment covering 147–177 has biased composition (basic and acidic residues); that stretch reads NSREGDRFMNRKRTRNWDEAGNNKKKRECNN. One can recognise a Helicase ATP-binding domain in the interval 256-433; that stretch reads VLEQAKAKNT…QVDCAIKIRN (178 aa). 269–276 contacts ATP; the sequence is LETGAGKT. The short motif at 378–381 is the DECH box element; that stretch reads DECH. Positions 651-812 constitute a Helicase C-terminal domain; the sequence is SLIKLLLKYQ…RTDLSHLKDT (162 aa). Residues 840–935 enclose the Dicer dsRNA-binding fold domain; sequence AVGLVHFYCS…LPDKGSGQDA (96 aa). A disordered region spans residues 929-952; the sequence is KGSGQDAEKADQDDEGEPVPGTAR. The region spanning 1189–1318 is the PAZ domain; the sequence is EVEEDLSKGK…LPPELCVVHP (130 aa). RNase III domains follow at residues 1342 to 1518 and 1559 to 1707; these read LAVQ…VEGG and FVGL…LDSG. The Mg(2+) site is built by Glu1597, Asp1693, and Glu1696. DRBM domains are found at residues 1733–1796 and 1831–1906; these read HPVR…ALKE and FTRQ…LLNK. A disordered region spans residues 1801 to 1831; sequence ESKEKHINNGNAGEDQGENENGNKKNGHQPF.

It belongs to the helicase family. Dicer subfamily. In terms of assembly, interacts (via N-terminus) with DDL. Interacts (via DRBM domains) with DRB1, DRB2 and DRB5. May interact with AGO1 or AGO10 through their common PAZ domains. The cofactor is Mg(2+). It depends on Mn(2+) as a cofactor. In terms of tissue distribution, highly expressed in flowers and seeds and detected in leaves and stems. Found in ovule integuments, inflorescence and floral meristems, stigma of flowers until just before pollination, vasculature of the funiculus, and embryo.

It localises to the nucleus. Ribonuclease (RNase) III involved in RNA-mediated post-transcriptional gene silencing (PTGS). Functions in the microRNAs (miRNAs) biogenesis pathway by cleaving primary miRNAs (pri-miRNAs) and precursor miRNAs (pre-miRNAs). Functions with DRB1/HYL1 and SERRATE proteins for accurate pri-miRNAs to miRNAs processing. Indirectly involved in the production of trans-acting small interfering RNAs (ta-siRNAs) derived from the TAS1, TAS2 or TAS3 endogenous transcripts by participating in the production of their initiating miRNAs. Involved in the processing of natural siRNAs (nat-siRNAs, derived from cis-natural antisense transcripts) by cleaving 24 nucleotide nat-siRNAs into 21 nucleotide nat-siRNAs. Can produce RDR6-dependent endogenous ta-siRNAs derived from TAS1 and TAS2. Required for the production of 30-40 nucleotide bacterial-induced long siRNAs (lsiRNA). Acts redundantly with DICER-LIKE 3 (DCL3) to promote flowering via repression of FLOWERING LOCUS C (FLC). Represses antiviral RNA silencing through negative regulation of the expression of DCL4 and DCL3. This Arabidopsis thaliana (Mouse-ear cress) protein is Endoribonuclease Dicer homolog 1 (DCL1).